The chain runs to 182 residues: ATP-dependent protease subunit HslV (182 aa).

Residue T12 is part of the active site. Residues A167, C170, and T173 each contribute to the Na(+) site.

The protein belongs to the peptidase T1B family. HslV subfamily. In terms of assembly, a double ring-shaped homohexamer of HslV is capped on each side by a ring-shaped HslU homohexamer. The assembly of the HslU/HslV complex is dependent on binding of ATP.

Its subcellular location is the cytoplasm. It carries out the reaction ATP-dependent cleavage of peptide bonds with broad specificity.. With respect to regulation, allosterically activated by HslU binding. In terms of biological role, protease subunit of a proteasome-like degradation complex believed to be a general protein degrading machinery. The polypeptide is ATP-dependent protease subunit HslV (Paramagnetospirillum magneticum (strain ATCC 700264 / AMB-1) (Magnetospirillum magneticum)).